Consider the following 64-residue polypeptide: Large ribosomal subunit protein bL32 (64 aa).

The disordered stretch occupies residues 1-35 (MAVQKSRVTPSRRGMRRAHDALSAKQLSTDPTTGE).

Belongs to the bacterial ribosomal protein bL32 family.

The protein is Large ribosomal subunit protein bL32 of Stenotrophomonas maltophilia (strain R551-3).